The chain runs to 421 residues: 4-hydroxy-3-methylbut-2-en-1-yl diphosphate synthase (flavodoxin) (421 aa).

[4Fe-4S] cluster is bound by residues Cys-311, Cys-314, Cys-357, and Glu-364.

It belongs to the IspG family. The cofactor is [4Fe-4S] cluster.

It carries out the reaction (2E)-4-hydroxy-3-methylbut-2-enyl diphosphate + oxidized [flavodoxin] + H2O + 2 H(+) = 2-C-methyl-D-erythritol 2,4-cyclic diphosphate + reduced [flavodoxin]. The protein operates within isoprenoid biosynthesis; isopentenyl diphosphate biosynthesis via DXP pathway; isopentenyl diphosphate from 1-deoxy-D-xylulose 5-phosphate: step 5/6. Converts 2C-methyl-D-erythritol 2,4-cyclodiphosphate (ME-2,4cPP) into 1-hydroxy-2-methyl-2-(E)-butenyl 4-diphosphate. The sequence is that of 4-hydroxy-3-methylbut-2-en-1-yl diphosphate synthase (flavodoxin) from Xanthomonas campestris pv. campestris (strain 8004).